A 688-amino-acid polypeptide reads, in one-letter code: Methionine--tRNA ligase (688 aa).

A 'HIGH' region motif is present at residues 13-23 (PYANGNFHIGH). Residues cysteine 144, cysteine 147, cysteine 157, and cysteine 160 each contribute to the Zn(2+) site. The 'KMSKS' region motif lies at 342 to 346 (KMSKS). Lysine 345 is a binding site for ATP. The 107-residue stretch at 582–688 (DFAKVDLRIA…PGAQPGMRIH (107 aa)) folds into the tRNA-binding domain.

Belongs to the class-I aminoacyl-tRNA synthetase family. MetG type 1 subfamily. As to quaternary structure, homodimer. Zn(2+) is required as a cofactor.

It localises to the cytoplasm. The catalysed reaction is tRNA(Met) + L-methionine + ATP = L-methionyl-tRNA(Met) + AMP + diphosphate. Its function is as follows. Is required not only for elongation of protein synthesis but also for the initiation of all mRNA translation through initiator tRNA(fMet) aminoacylation. This chain is Methionine--tRNA ligase, found in Acidovorax ebreus (strain TPSY) (Diaphorobacter sp. (strain TPSY)).